We begin with the raw amino-acid sequence, 152 residues long: Large ribosomal subunit protein uL22 (152 aa).

The protein belongs to the universal ribosomal protein uL22 family. Part of the 50S ribosomal subunit.

Its function is as follows. This protein binds specifically to 23S rRNA. It makes multiple contacts with different domains of the 23S rRNA in the assembled 50S subunit and ribosome. In terms of biological role, the globular domain of the protein is located near the polypeptide exit tunnel on the outside of the subunit, while an extended beta-hairpin is found that lines the wall of the exit tunnel in the center of the 70S ribosome. This is Large ribosomal subunit protein uL22 from Cenarchaeum symbiosum (strain A).